The chain runs to 91 residues: Small ribosomal subunit protein uS19 (91 aa).

It belongs to the universal ribosomal protein uS19 family.

Functionally, protein S19 forms a complex with S13 that binds strongly to the 16S ribosomal RNA. The polypeptide is Small ribosomal subunit protein uS19 (Chromohalobacter salexigens (strain ATCC BAA-138 / DSM 3043 / CIP 106854 / NCIMB 13768 / 1H11)).